The primary structure comprises 348 residues: Phospho-2-dehydro-3-deoxyheptonate aldolase, Trp-sensitive (348 aa).

It belongs to the class-I DAHP synthase family.

It carries out the reaction D-erythrose 4-phosphate + phosphoenolpyruvate + H2O = 7-phospho-2-dehydro-3-deoxy-D-arabino-heptonate + phosphate. Its pathway is metabolic intermediate biosynthesis; chorismate biosynthesis; chorismate from D-erythrose 4-phosphate and phosphoenolpyruvate: step 1/7. In terms of biological role, stereospecific condensation of phosphoenolpyruvate (PEP) and D-erythrose-4-phosphate (E4P) giving rise to 3-deoxy-D-arabino-heptulosonate-7-phosphate (DAHP). In Buchnera aphidicola subsp. Baizongia pistaciae (strain Bp), this protein is Phospho-2-dehydro-3-deoxyheptonate aldolase, Trp-sensitive (aroH).